The chain runs to 148 residues: Deoxyuridine 5'-triphosphate nucleotidohydrolase (148 aa).

Residues Arg-67 to Gly-69, Asn-80, Leu-84 to Asp-86, and Met-94 each bind substrate.

The protein belongs to the dUTPase family. It depends on Mg(2+) as a cofactor.

The enzyme catalyses dUTP + H2O = dUMP + diphosphate + H(+). Its pathway is pyrimidine metabolism; dUMP biosynthesis; dUMP from dCTP (dUTP route): step 2/2. Functionally, this enzyme is involved in nucleotide metabolism: it produces dUMP, the immediate precursor of thymidine nucleotides and it decreases the intracellular concentration of dUTP so that uracil cannot be incorporated into DNA. The sequence is that of Deoxyuridine 5'-triphosphate nucleotidohydrolase from Ralstonia pickettii (strain 12J).